The chain runs to 320 residues: Nicotianamine synthase 2 (320 aa).

Belongs to the nicotianamine synthase (NAS)-like family.

It catalyses the reaction 3 S-adenosyl-L-methionine = nicotianamine + 3 S-methyl-5'-thioadenosine + 3 H(+). Synthesizes nicotianamine, a polyamine which serves as a sensor for the physiological iron status within the plant, and/or might be involved in the transport of iron. The sequence is that of Nicotianamine synthase 2 (NAS2) from Arabidopsis thaliana (Mouse-ear cress).